A 231-amino-acid polypeptide reads, in one-letter code: MSLKLPEHVAIIMDGNGRWARQRGLPRVAGHYRGAEVAEDIIEYCIELGIKHLTLFAFSTENWNRPKEEVKALFELMENYIRSKREKLYSLGVRVRLIGRRDRLSRGLVNLMEELESDSKDFKNLFLNVAIDYGGRDDILRAVKKIMEVQPSKLDEETFSQFLDLSCSPDPDLLIRTAGEKRISNFLLWNLAYTELYFTDTLWPDFTREEFMKALEDYSRRKRKFGRVLDE.

Asp-14 is a catalytic residue. Asp-14 is a Mg(2+) binding site. Residues 15-18 (GNGR), Trp-19, Arg-27, His-31, and 59-61 (STE) each bind substrate. The Proton acceptor role is filled by Asn-62. Residues Trp-63, Arg-65, Arg-176, and 182-184 (RIS) contribute to the substrate site. Mg(2+) is bound at residue Glu-195.

This sequence belongs to the UPP synthase family. As to quaternary structure, homodimer. Mg(2+) is required as a cofactor.

Functionally, catalyzes the condensation of isopentenyl diphosphate (IPP) with allylic pyrophosphates generating different type of terpenoids. This is Isoprenyl transferase from Aquifex aeolicus (strain VF5).